The primary structure comprises 470 residues: Cysteine--tRNA ligase (470 aa).

Cys-31 contributes to the Zn(2+) binding site. The short motif at Pro-33–His-43 is the 'HIGH' region element. Zn(2+)-binding residues include Cys-209, His-234, and Glu-238. The 'KMSKS' region motif lies at Lys-266–Ser-270. Lys-269 provides a ligand contact to ATP.

The protein belongs to the class-I aminoacyl-tRNA synthetase family. Requires Zn(2+) as cofactor.

Its subcellular location is the cytoplasm. The enzyme catalyses tRNA(Cys) + L-cysteine + ATP = L-cysteinyl-tRNA(Cys) + AMP + diphosphate. In Saccharolobus solfataricus (strain ATCC 35092 / DSM 1617 / JCM 11322 / P2) (Sulfolobus solfataricus), this protein is Cysteine--tRNA ligase.